The chain runs to 786 residues: MMEENKQLAQRIDGAIQCAKQDVANLRAELTATGHRLAELGELEEPGEPQEHQQQQQQQNHQDAPVQRQKALTELGQKGDVASQETSLDKVLLHEEVLRLQEEVSVLKQVREMLNRELEETGGGCSVELMSVSQLRVQLTQKEQELDRAKEALQAMKTDRKRLRLERTDLVNQMQQLYTTLESREEQLRDFIRNYEQHRKESEDAVRVLAREKDLLEREKWDLRRQTKEATEHAGALRSALDLKESRIKELEAELTMAKQSLATLTKDVPKRHSLAMPTETVVNGNQEWAMHAELPLTAAIRQSQQNLYHSIDRQVLKASPCVCDGDGISMMSSAAARISPCHSKQASVMSDASVMEGERSSTPSDSPRHRTHSLCNSLEDLEEQRRRKKKERMGLGSLSRVFGRGKQRKSMDPTLFDDSDSLSSPARLSVSLSECEEQLDRLQQVELARSAPMCRWRAGTVQAWLEVIMAMPMYMRACADNVKSGKVLLVLTDEDLGNVLGISNSMHRRKLRLAIEDYRDAEAGHGLSKAAELDHHWVAQAWLTDVGLPQYSQFFHTHLVDGRLLSTLTRADLEKHLHVSKKAHQNSLLLGIQLLHTLNFDKEILQSRRSECENQNTDPAVWTCQRIIKWIKEIDLKEFADNLQTSGVHGAVMVLDPSFRSDTMATALCIPSNKHMVRHHLSEEMKALVSAARAGLEQEVEPLGTPPTLHRQSSLSSSSPSCHDDQQSLRRVKQQLGLSPKNLTARNISHQSRSGSFPRNGLQEVSLQRERCPVRHFSAAELTNV.

Residues 44–70 (EEPGEPQEHQQQQQQQNHQDAPVQRQK) form a disordered region. Residues 52-62 (HQQQQQQQNHQ) show a composition bias toward low complexity. Residues 92–270 (LLHEEVLRLQ…SLATLTKDVP (179 aa)) adopt a coiled-coil conformation. Residues 350-425 (MSDASVMEGE…LFDDSDSLSS (76 aa)) form a disordered region. 3 SAM domains span residues 457-522 (WRAG…YRDA), 535-599 (DHHW…LHTL), and 623-686 (WTCQ…SEEM). Positions 703-760 (PLGTPPTLHRQSSLSSSSPSCHDDQQSLRRVKQQLGLSPKNLTARNISHQSRSGSFPR) are disordered. A compositionally biased stretch (polar residues) spans 742 to 758 (KNLTARNISHQSRSGSF).

Belongs to the kazrin family.

This is Kazrin-A (kazna) from Danio rerio (Zebrafish).